A 361-amino-acid polypeptide reads, in one-letter code: Probable dual-specificity RNA methyltransferase RlmN (361 aa).

The active-site Proton acceptor is Glu-91. The Radical SAM core domain occupies 97-329 (QHYGLSVCVT…KKKGVNCVVR (233 aa)). Cys-104 and Cys-340 form a disulfide bridge. [4Fe-4S] cluster is bound by residues Cys-111, Cys-115, and Cys-118. Residues 163–164 (GE), Ser-195, 218–220 (SLH), and Asn-296 contribute to the S-adenosyl-L-methionine site. Residue Cys-340 is the S-methylcysteine intermediate of the active site.

It belongs to the radical SAM superfamily. RlmN family. [4Fe-4S] cluster is required as a cofactor.

Its subcellular location is the cytoplasm. It catalyses the reaction adenosine(2503) in 23S rRNA + 2 reduced [2Fe-2S]-[ferredoxin] + 2 S-adenosyl-L-methionine = 2-methyladenosine(2503) in 23S rRNA + 5'-deoxyadenosine + L-methionine + 2 oxidized [2Fe-2S]-[ferredoxin] + S-adenosyl-L-homocysteine. The catalysed reaction is adenosine(37) in tRNA + 2 reduced [2Fe-2S]-[ferredoxin] + 2 S-adenosyl-L-methionine = 2-methyladenosine(37) in tRNA + 5'-deoxyadenosine + L-methionine + 2 oxidized [2Fe-2S]-[ferredoxin] + S-adenosyl-L-homocysteine. Functionally, specifically methylates position 2 of adenine 2503 in 23S rRNA and position 2 of adenine 37 in tRNAs. This is Probable dual-specificity RNA methyltransferase RlmN from Streptococcus pneumoniae serotype 4 (strain ATCC BAA-334 / TIGR4).